A 222-amino-acid chain; its full sequence is Putative N-acetylmannosamine-6-phosphate 2-epimerase (222 aa).

It belongs to the NanE family.

The catalysed reaction is an N-acyl-D-glucosamine 6-phosphate = an N-acyl-D-mannosamine 6-phosphate. It functions in the pathway amino-sugar metabolism; N-acetylneuraminate degradation; D-fructose 6-phosphate from N-acetylneuraminate: step 3/5. In terms of biological role, converts N-acetylmannosamine-6-phosphate (ManNAc-6-P) to N-acetylglucosamine-6-phosphate (GlcNAc-6-P). This is Putative N-acetylmannosamine-6-phosphate 2-epimerase from Staphylococcus aureus (strain Mu3 / ATCC 700698).